The sequence spans 137 residues: ATP synthase epsilon chain, chloroplastic (137 aa).

This sequence belongs to the ATPase epsilon chain family. In terms of assembly, F-type ATPases have 2 components, CF(1) - the catalytic core - and CF(0) - the membrane proton channel. CF(1) has five subunits: alpha(3), beta(3), gamma(1), delta(1), epsilon(1). CF(0) has three main subunits: a, b and c.

The protein localises to the plastid. It is found in the chloroplast thylakoid membrane. Its function is as follows. Produces ATP from ADP in the presence of a proton gradient across the membrane. The sequence is that of ATP synthase epsilon chain, chloroplastic from Bigelowiella natans (Pedinomonas minutissima).